The sequence spans 82 residues: Phosphoribosylformylglycinamidine synthase subunit PurS (82 aa).

This sequence belongs to the PurS family. Homodimer. Part of the FGAM synthase complex composed of 1 PurL, 1 PurQ and 2 PurS subunits.

The protein localises to the cytoplasm. It catalyses the reaction N(2)-formyl-N(1)-(5-phospho-beta-D-ribosyl)glycinamide + L-glutamine + ATP + H2O = 2-formamido-N(1)-(5-O-phospho-beta-D-ribosyl)acetamidine + L-glutamate + ADP + phosphate + H(+). The protein operates within purine metabolism; IMP biosynthesis via de novo pathway; 5-amino-1-(5-phospho-D-ribosyl)imidazole from N(2)-formyl-N(1)-(5-phospho-D-ribosyl)glycinamide: step 1/2. Functionally, part of the phosphoribosylformylglycinamidine synthase complex involved in the purines biosynthetic pathway. Catalyzes the ATP-dependent conversion of formylglycinamide ribonucleotide (FGAR) and glutamine to yield formylglycinamidine ribonucleotide (FGAM) and glutamate. The FGAM synthase complex is composed of three subunits. PurQ produces an ammonia molecule by converting glutamine to glutamate. PurL transfers the ammonia molecule to FGAR to form FGAM in an ATP-dependent manner. PurS interacts with PurQ and PurL and is thought to assist in the transfer of the ammonia molecule from PurQ to PurL. The polypeptide is Phosphoribosylformylglycinamidine synthase subunit PurS (Thermotoga maritima (strain ATCC 43589 / DSM 3109 / JCM 10099 / NBRC 100826 / MSB8)).